A 584-amino-acid chain; its full sequence is uncharacterized protein (584 aa).

This is an uncharacterized protein from Magallana gigas (Pacific oyster).